The chain runs to 383 residues: MFPERGTDEEEVLEELRRKTREDLTFDSGKILGSMCTYPHPFAVKIITEFIDRNLGDPGLHIGSRKVEEEAVEMLSNLLGLKKGYGHIVSGGTEANILAVRAFRNLAGVEKPELILPKSAHFSFIKAGEMLGVKLIWAELNEDYTVNVRDVEEKITDNTIGIVGIAGTTGLGVVDDIPALSDLALDYGLPLHVDAAFGGFVIPFAKALGYDIPDFDFRLKGVKSITIDPHKMGMVPIPAGGIIFRERKYIDAISILAPYLAGGRIWQATITGTRPGANALAVWAMIKHLGFEGYKEIVRKAMELSQWFAGELKKIPGVYLIREPVLNIVSFGTENLERVEEELKRRGWGISAHRGYIRIVMMPHVRREHLEEFLRDLEEIVRG.

The residue at position 231 (lysine 231) is an N6-(pyridoxal phosphate)lysine.

Belongs to the group II decarboxylase family. MfnA subfamily. It depends on pyridoxal 5'-phosphate as a cofactor.

It carries out the reaction L-aspartate + H(+) = beta-alanine + CO2. It participates in cofactor biosynthesis; coenzyme A biosynthesis. Functionally, catalyzes the decarboxylation of L-aspartate to produce beta-alanine. The protein is Probable L-aspartate decarboxylase of Thermococcus gammatolerans (strain DSM 15229 / JCM 11827 / EJ3).